A 208-amino-acid chain; its full sequence is Superoxide dismutase [Mn] 2 (208 aa).

H28, H83, D165, and H169 together coordinate Mn(2+).

This sequence belongs to the iron/manganese superoxide dismutase family. As to quaternary structure, homodimer. Requires Mn(2+) as cofactor.

It carries out the reaction 2 superoxide + 2 H(+) = H2O2 + O2. Its function is as follows. Destroys superoxide anion radicals which are normally produced within the cells and which are toxic to biological systems. This chain is Superoxide dismutase [Mn] 2 (sodA2), found in Bacillus cereus (strain ATCC 14579 / DSM 31 / CCUG 7414 / JCM 2152 / NBRC 15305 / NCIMB 9373 / NCTC 2599 / NRRL B-3711).